The primary structure comprises 259 residues: Bisphosphoglycerate mutase (259 aa).

Residue Ser-2 is modified to N-acetylserine. Substrate-binding positions include 10–17 (RHGEGAWN), 23–24 (CS), Arg-62, 89–92 (ERHY), Arg-100, and 116–117 (RR). The active-site Tele-phosphohistidine intermediate is the His-11. Residue Glu-89 is the Proton donor/acceptor of the active site. Phosphothreonine is present on Thr-122. 189–190 (GN) provides a ligand contact to substrate.

This sequence belongs to the phosphoglycerate mutase family. BPG-dependent PGAM subfamily. As to quaternary structure, homodimer.

It catalyses the reaction (2R)-3-phospho-glyceroyl phosphate = (2R)-2,3-bisphosphoglycerate + H(+). It carries out the reaction (2R)-2-phosphoglycerate = (2R)-3-phosphoglycerate. Its activity is regulated as follows. At alkaline pH BPGM favors the synthase reaction; however, at lower pH the phosphatase reaction is dominant. Inhibited by citrate. Functionally, plays a major role in regulating hemoglobin oxygen affinity by controlling the levels of its allosteric effector 2,3-bisphosphoglycerate (2,3-BPG). Also exhibits mutase (EC 5.4.2.11) activity. The sequence is that of Bisphosphoglycerate mutase (BPGM) from Macaca fascicularis (Crab-eating macaque).